Reading from the N-terminus, the 495-residue chain is Glycerol kinase (495 aa).

ADP is bound at residue Thr-11. The ATP site is built by Thr-11, Thr-12, and Ser-13. Thr-11 contacts sn-glycerol 3-phosphate. An ADP-binding site is contributed by Arg-15. Arg-81, Glu-82, Tyr-133, and Asp-242 together coordinate sn-glycerol 3-phosphate. Glycerol contacts are provided by Arg-81, Glu-82, Tyr-133, Asp-242, and Gln-243. Residues Thr-264 and Gly-307 each contribute to the ADP site. Residues Thr-264, Gly-307, Gln-311, and Gly-408 each contribute to the ATP site. Residues Gly-408 and Asn-412 each contribute to the ADP site.

This sequence belongs to the FGGY kinase family.

It carries out the reaction glycerol + ATP = sn-glycerol 3-phosphate + ADP + H(+). The protein operates within polyol metabolism; glycerol degradation via glycerol kinase pathway; sn-glycerol 3-phosphate from glycerol: step 1/1. Its activity is regulated as follows. Inhibited by fructose 1,6-bisphosphate (FBP). In terms of biological role, key enzyme in the regulation of glycerol uptake and metabolism. Catalyzes the phosphorylation of glycerol to yield sn-glycerol 3-phosphate. The protein is Glycerol kinase of Citrifermentans bemidjiense (strain ATCC BAA-1014 / DSM 16622 / JCM 12645 / Bem) (Geobacter bemidjiensis).